Consider the following 295-residue polypeptide: Nucleotide-binding protein BLi03725/BL03417 (295 aa).

Position 16 to 23 (16 to 23 (GMSGAGKT)) interacts with ATP. 67-70 (DLRG) lines the GTP pocket.

This sequence belongs to the RapZ-like family.

Displays ATPase and GTPase activities. This Bacillus licheniformis (strain ATCC 14580 / DSM 13 / JCM 2505 / CCUG 7422 / NBRC 12200 / NCIMB 9375 / NCTC 10341 / NRRL NRS-1264 / Gibson 46) protein is Nucleotide-binding protein BLi03725/BL03417.